Here is a 104-residue protein sequence, read N- to C-terminus: MSTYAIIKTGGKQVKVEVGQAVYVEKLNVEAGQEVTFNEVVLVGGENTVVGTPLVAGATVVGTVEKQGKQKKVVTYKYKPKKGSHRKQGHRQPYTKVVINAINA.

The protein belongs to the bacterial ribosomal protein bL21 family. As to quaternary structure, part of the 50S ribosomal subunit. Contacts protein L20.

Functionally, this protein binds to 23S rRNA in the presence of protein L20. In Streptococcus pneumoniae serotype 2 (strain D39 / NCTC 7466), this protein is Large ribosomal subunit protein bL21.